Reading from the N-terminus, the 108-residue chain is Holo-[acyl-carrier-protein] synthase (108 aa).

Mg(2+)-binding residues include aspartate 9 and glutamate 54.

Belongs to the P-Pant transferase superfamily. AcpS family. It depends on Mg(2+) as a cofactor.

It localises to the cytoplasm. It catalyses the reaction apo-[ACP] + CoA = holo-[ACP] + adenosine 3',5'-bisphosphate + H(+). In terms of biological role, transfers the 4'-phosphopantetheine moiety from coenzyme A to a Ser of acyl-carrier-protein. The chain is Holo-[acyl-carrier-protein] synthase from Mycoplasmopsis pulmonis (strain UAB CTIP) (Mycoplasma pulmonis).